The primary structure comprises 107 residues: DNA polymerase delta subunit 4 (107 aa).

Residues 1–16 (MGRKRFITDSYPVVKK) carry the PCNA-interaction protein motif (PIP box) motif. The disordered stretch occupies residues 1–40 (MGRKRFITDSYPVVKKREGPPGHSKGELAPELGEDTQSLS). Residues 15 to 28 (KKREGPPGHSKGEL) show a composition bias toward basic and acidic residues.

It belongs to the DNA polymerase delta subunit 4 family. As to quaternary structure, component of the tetrameric DNA polymerase delta complex (Pol-delta4), which consists of POLD1/p125, POLD2/p50, POLD3/p66/p68 and POLD4/p12, with POLD1 bearing DNA polymerase and 3' to 5' proofreading exonuclease activities. Within this complex, directly interacts with POLD1 and POLD2. Directly interacts with PCNA, as do POLD1 and POLD3; this interaction stimulates Pol-delta4 polymerase activity. As POLD1 and POLD2, directly interacts with WRNIP1; this interaction stimulates DNA polymerase delta-mediated DNA synthesis, independently of the presence of PCNA, possibly by increasing initiation frequency. Upon genotoxic stress induced by DNA damaging agents or by replication stress, POLD4 is proteolytically degraded and Pol-delta4 is converted into a trimeric form of the complex (Pol-delta3) that has an increased proofreading activity. The DNA polymerase delta complex interacts with POLDIP2; this interaction is probably mediated through direct binding to POLD2. Post-translationally, ubiquitinated; undergoes 'Lys-48'-linked polyubiquitination in response to UV irradiation or treatment with an alkylating agent, leading to proteasomal degradation. This modification is mediated, at least in part, by RNF8. Ubiquitinated; undergoes 'Lys-48'-linked ubiquitination in response to UV irradiation, leading to proteasomal degradation. This modification is partly mediated by RNF8 and by the DCX(DTL) E3 ubiquitin ligase complex (also called CRL4(CDT2)). Efficient degradation requires the presence of PCNA and is required for the inhibition of fork progression after DNA damage.

It localises to the nucleus. Functionally, as a component of the tetrameric DNA polymerase delta complex (Pol-delta4), plays a role in high fidelity genome replication and repair. Within this complex, increases the rate of DNA synthesis and decreases fidelity by regulating POLD1 polymerase and proofreading 3' to 5' exonuclease activity. Pol-delta4 participates in Okazaki fragment processing, through both the short flap pathway, as well as a nick translation system. Under conditions of DNA replication stress, required for the repair of broken replication forks through break-induced replication (BIR), a mechanism that may induce segmental genomic duplications of up to 200 kb. Involved in Pol-delta4 translesion synthesis (TLS) of templates carrying O6-methylguanine or abasic sites. Its degradation in response to DNA damage is required for the inhibition of fork progression and cell survival. The polypeptide is DNA polymerase delta subunit 4 (Pold4) (Mus musculus (Mouse)).